We begin with the raw amino-acid sequence, 329 residues long: E3 ubiquitin-protein ligase SINA-like 4 (329 aa).

Positions 1-12 (MTKLGRRNDGGG) are enriched in basic and acidic residues. A disordered region spans residues 1–58 (MTKLGRRNDGGGKSHRSSTKRQRRTSVSVDDPSPGEEEEKTLVVLTDDSDSEEDDKPL). Positions 13–24 (KSHRSSTKRQRR) are enriched in basic residues. Residues 86 to 122 (CPNCFDPLKKPIFQCNNGHLACFLCCIKLKKRCSFCK) form an RING-type; degenerate zinc finger. The tract at residues 136–325 (VIKAGLVSCS…MEISIGDKND (190 aa)) is SBD. The SIAH-type zinc finger occupies 139–198 (AGLVSCSNAIYGCKQSTTYGNQLQSHEKVCVFAPCSCPIKDCNYIGFYKDLINHFRATHK). Zn(2+) is bound by residues C144, C151, H164, C168, C175, C180, H192, and H197.

This sequence belongs to the SINA (Seven in absentia) family.

The enzyme catalyses S-ubiquitinyl-[E2 ubiquitin-conjugating enzyme]-L-cysteine + [acceptor protein]-L-lysine = [E2 ubiquitin-conjugating enzyme]-L-cysteine + N(6)-ubiquitinyl-[acceptor protein]-L-lysine.. It participates in protein modification; protein ubiquitination. Functionally, E3 ubiquitin-protein ligase that mediates ubiquitination and subsequent proteasomal degradation of target proteins. E3 ubiquitin ligases accept ubiquitin from an E2 ubiquitin-conjugating enzyme in the form of a thioester and then directly transfers the ubiquitin to targeted substrates. It probably triggers the ubiquitin-mediated degradation of different substrates. The sequence is that of E3 ubiquitin-protein ligase SINA-like 4 from Arabidopsis thaliana (Mouse-ear cress).